The following is a 629-amino-acid chain: Hemocyanin G chain (629 aa).

6 residues coordinate Cu cation: H171, H175, H202, H322, H326, and H362. Residues N447 and N506 are each glycosylated (N-linked (GlcNAc...) asparagine). The cysteines at positions 534 and 582 are disulfide-linked. The N-linked (GlcNAc...) asparagine glycan is linked to N615.

This sequence belongs to the tyrosinase family. Hemocyanin subfamily. Tarantula hemocyanin is a 24-chain polymer with seven different chains identified. As to expression, hemolymph.

The protein localises to the secreted. The protein resides in the extracellular space. Its function is as follows. Hemocyanins are copper-containing oxygen carriers occurring freely dissolved in the hemolymph of many mollusks and arthropods. This chain is Hemocyanin G chain (HCG), found in Aphonopelma sp. (American tarantula).